The following is a 232-amino-acid chain: Cobalt transport protein CbiM (232 aa).

Transmembrane regions (helical) follow at residues 6 to 26, 43 to 63, 84 to 104, 107 to 127, 135 to 155, and 181 to 201; these read GFLPPAHAIAWGVASAPFVVH, LLLGASGAFTFVLSALKLPSV, IMAVLGTITLLFQALLLAHGG, TLGANVFSMAIVGPWAGYGVY, VPLMVTVFFGAFVADLSTYCV, and IFAVTQIPLAVSEGLLTVIVM.

This sequence belongs to the CbiM family. In terms of assembly, forms an energy-coupling factor (ECF) transporter complex composed of an ATP-binding protein (A component, CbiO), a transmembrane protein (T component, CbiQ) and 2 possible substrate-capture proteins (S components, CbiM and CbiN) of unknown stoichimetry.

It localises to the cell membrane. It functions in the pathway cofactor biosynthesis; adenosylcobalamin biosynthesis. In terms of biological role, part of the energy-coupling factor (ECF) transporter complex CbiMNOQ involved in cobalt import. The protein is Cobalt transport protein CbiM of Streptomyces coelicolor (strain ATCC BAA-471 / A3(2) / M145).